The following is a 355-amino-acid chain: MIPRKRYGSKNTDQGVYLGLSKTQVLSPATAISSSSDSTPLPTPVALVPSPPDTMSCRDRTQEFQSACKSLQSRQNGIQTSKPALHAARQCSEFTLMARRIGKDLSNTFAKLEKLTILAKRKSLFDDKAVEIEELTYIIKQDINSLNKQIAQLQDFVRAKGSQSGRHLQTHSNTIVVSLQSKLASMSNDFKSVLEVRTENLKQQRNRREQFSRAPVSALPLAPNNLGGGPIILGAESRASRDVAIDMMDPRTSQQLQLIDEQDSYIQSRADTMQNIESTIVELGSIFQQLAHMVKEQEETIQRIDENVLGAQLDVEAAHSEILKYFQSVTSNRWLMVKIFLILIVFFIIFVVFLA.

Residues 1–333 (MIPRKRYGSK…KYFQSVTSNR (333 aa)) are Cytoplasmic-facing. The short motif at 245–247 (IDM) is the IxM motif; signal for cargo packaging into COPII-coated vesicles element. The t-SNARE coiled-coil homology domain maps to 263–325 (DSYIQSRADT…EAAHSEILKY (63 aa)). Residues 287-318 (FQQLAHMVKEQEETIQRIDENVLGAQLDVEAA) are a coiled coil. A helical; Anchor for type IV membrane protein membrane pass occupies residues 334-354 (WLMVKIFLILIVFFIIFVVFL). A topological domain (vesicular) is located at residue Ala-355.

This sequence belongs to the syntaxin family. Part of a ternary complex containing STX5A, NSFL1C and VCP. Part of a unique SNARE complex composed of the Golgi SNAREs GOSR1, GOSR2, YKT6 and VTI1A. Component of a SNARE complex consisting of STX5, YKT6, GOSR1 and BET1L. Interacts with BET1L. Interacts with BET1. Interacts with COG4. Interacts with GM130/GOLGA2. Interacts (via IxM motif) with SEC24C and SEC24D; mediates STX5 packaging into COPII-coated vesicles. Interacts with VLDLR; this interaction mediates VLDLR translocation from the endoplasmic reticulum to the plasma membrane.

It is found in the endoplasmic reticulum-Golgi intermediate compartment membrane. The protein localises to the golgi apparatus membrane. Functionally, mediates endoplasmic reticulum to Golgi transport. Together with p115/USO1 and GM130/GOLGA2, involved in vesicle tethering and fusion at the cis-Golgi membrane to maintain the stacked and inter-connected structure of the Golgi apparatus. Its function is as follows. Required for Golgi to endoplasmic reticulum retrogade transport, and for intra-Golgi transport. This Mus musculus (Mouse) protein is Syntaxin-5 (Stx5).